Consider the following 301-residue polypeptide: Methionyl-tRNA formyltransferase (301 aa).

109–112 (SLLP) serves as a coordination point for (6S)-5,6,7,8-tetrahydrofolate.

Belongs to the Fmt family.

It carries out the reaction L-methionyl-tRNA(fMet) + (6R)-10-formyltetrahydrofolate = N-formyl-L-methionyl-tRNA(fMet) + (6S)-5,6,7,8-tetrahydrofolate + H(+). Its function is as follows. Attaches a formyl group to the free amino group of methionyl-tRNA(fMet). The formyl group appears to play a dual role in the initiator identity of N-formylmethionyl-tRNA by promoting its recognition by IF2 and preventing the misappropriation of this tRNA by the elongation apparatus. The chain is Methionyl-tRNA formyltransferase from Jannaschia sp. (strain CCS1).